The primary structure comprises 365 residues: F-box protein At1g48060 (365 aa).

Positions 1-20 (MKPQEEEEKNENMARKRSKS) are disordered. One can recognise an F-box domain in the interval 20 to 69 (SSSSLSIPLDIATDIFLRLPAKSVVRFSCVAKHWSSITTAPYFTNSFETR).

This is F-box protein At1g48060 from Arabidopsis thaliana (Mouse-ear cress).